Here is a 271-residue protein sequence, read N- to C-terminus: Mannosyl-3-phosphoglycerate phosphatase (271 aa).

Asp13 serves as the catalytic Nucleophile. Asp13, Asp15, and Asp214 together coordinate Mg(2+).

The protein belongs to the HAD-like hydrolase superfamily. MPGP family. Mg(2+) is required as a cofactor.

It localises to the cytoplasm. The enzyme catalyses 2-O-(alpha-D-mannosyl)-3-phosphoglycerate + H2O = (2R)-2-O-(alpha-D-mannosyl)-glycerate + phosphate. The protein is Mannosyl-3-phosphoglycerate phosphatase of Escherichia coli O7:K1 (strain IAI39 / ExPEC).